The chain runs to 420 residues: Serine hydroxymethyltransferase (420 aa).

(6S)-5,6,7,8-tetrahydrofolate contacts are provided by residues L123 and 127–129; that span reads GHL. K232 carries the post-translational modification N6-(pyridoxal phosphate)lysine.

It belongs to the SHMT family. As to quaternary structure, homodimer. It depends on pyridoxal 5'-phosphate as a cofactor.

The protein localises to the cytoplasm. The catalysed reaction is (6R)-5,10-methylene-5,6,7,8-tetrahydrofolate + glycine + H2O = (6S)-5,6,7,8-tetrahydrofolate + L-serine. It functions in the pathway one-carbon metabolism; tetrahydrofolate interconversion. Its pathway is amino-acid biosynthesis; glycine biosynthesis; glycine from L-serine: step 1/1. Its function is as follows. Catalyzes the reversible interconversion of serine and glycine with tetrahydrofolate (THF) serving as the one-carbon carrier. This reaction serves as the major source of one-carbon groups required for the biosynthesis of purines, thymidylate, methionine, and other important biomolecules. Also exhibits THF-independent aldolase activity toward beta-hydroxyamino acids, producing glycine and aldehydes, via a retro-aldol mechanism. The sequence is that of Serine hydroxymethyltransferase from Ehrlichia chaffeensis (strain ATCC CRL-10679 / Arkansas).